A 145-amino-acid chain; its full sequence is D-aminoacyl-tRNA deacylase (145 aa).

The Gly-cisPro motif, important for rejection of L-amino acids signature appears at 137-138 (GP).

Belongs to the DTD family. In terms of assembly, homodimer.

The protein localises to the cytoplasm. The enzyme catalyses glycyl-tRNA(Ala) + H2O = tRNA(Ala) + glycine + H(+). It carries out the reaction a D-aminoacyl-tRNA + H2O = a tRNA + a D-alpha-amino acid + H(+). An aminoacyl-tRNA editing enzyme that deacylates mischarged D-aminoacyl-tRNAs. Also deacylates mischarged glycyl-tRNA(Ala), protecting cells against glycine mischarging by AlaRS. Acts via tRNA-based rather than protein-based catalysis; rejects L-amino acids rather than detecting D-amino acids in the active site. By recycling D-aminoacyl-tRNA to D-amino acids and free tRNA molecules, this enzyme counteracts the toxicity associated with the formation of D-aminoacyl-tRNA entities in vivo and helps enforce protein L-homochirality. This chain is D-aminoacyl-tRNA deacylase, found in Escherichia coli O139:H28 (strain E24377A / ETEC).